The following is a 961-amino-acid chain: RNA polymerase II subunit A C-terminal domain phosphatase (961 aa).

An N-acetylmethionine modification is found at Met1. Positions 178–344 (HRNRKLVLMV…SRESQTRKKV (167 aa)) constitute an FCP1 homology domain. Residues 328-589 (DMNAPPGSRE…EEEDTDEDDH (262 aa)) form a disordered region. Residues 394–406 (DSPRPGKPDERDI) show a composition bias toward basic and acidic residues. Ser395 is modified (phosphoserine). Positions 450–462 (LDFDLSSDSESSS) are enriched in acidic residues. Positions 463–475 (ESEGTKSSSSASD) are enriched in low complexity. The segment covering 575 to 588 (SMEEEEEEDTDEDD) has biased composition (acidic residues). The BRCT domain maps to 629–728 (LKSKVLADVA…DKVEEQLFPL (100 aa)). Phosphoserine is present on residues Ser674 and Ser740. Disordered stretches follow at residues 730-752 (DDHTKAQRENSPAAFPDREGVPP) and 780-949 (KLIR…ADEM). N6-acetyllysine is present on Lys780. Residues 793–803 (SSSLPIRQEPS) are compositionally biased toward polar residues. Residue Ser839 is modified to Phosphoserine. Over residues 850–859 (CKEDLESMDK) the composition is skewed to basic and acidic residues. Composition is skewed to acidic residues over residues 860-873 (EVDDILGEGSDDSD) and 937-947 (NEDEGSSSEAD). A phosphoserine mark is found at Ser869 and Ser872.

Homodimer. Interacts with GTF2F1. Interacts with WDR77, SNRPB and SNRNP70. In terms of processing, phosphorylated. In the presence of TFIIF, the phosphorylated form has an increased CTD phosphatase activity. The phosphorylation is required for the physical interaction with GTF2F1. In terms of tissue distribution, ubiquitously expressed.

It localises to the nucleus. The protein resides in the cytoplasm. Its subcellular location is the cytoskeleton. The protein localises to the microtubule organizing center. It is found in the centrosome. It localises to the spindle pole. The protein resides in the midbody. The enzyme catalyses O-phospho-L-seryl-[protein] + H2O = L-seryl-[protein] + phosphate. The catalysed reaction is O-phospho-L-threonyl-[protein] + H2O = L-threonyl-[protein] + phosphate. In terms of biological role, processively dephosphorylates 'Ser-2' and 'Ser-5' of the heptad repeats YSPTSPS in the C-terminal domain of the largest RNA polymerase II subunit. This promotes the activity of RNA polymerase II. Plays a role in the exit from mitosis by dephosphorylating crucial mitotic substrates (USP44, CDC20 and WEE1) that are required for M-phase-promoting factor (MPF)/CDK1 inactivation. The protein is RNA polymerase II subunit A C-terminal domain phosphatase (CTDP1) of Homo sapiens (Human).